A 147-amino-acid polypeptide reads, in one-letter code: Hemoglobin subunit beta (147 aa).

Val2 carries the post-translational modification N-acetylvaline. Positions 3–147 (HLSAEEKEAV…VANALAHKYH (145 aa)) constitute a Globin domain. Phosphoserine is present on Ser45. N6-acetyllysine is present on Lys60. His64 contacts heme b. At Lys83 the chain carries N6-acetyllysine. His93 is a heme b binding site. Residue Cys94 is modified to S-nitrosocysteine. Lys145 is subject to N6-acetyllysine.

The protein belongs to the globin family. In terms of assembly, heterotetramer of two alpha chains and two beta chains. As to expression, red blood cells.

Functionally, involved in oxygen transport from the lung to the various peripheral tissues. The sequence is that of Hemoglobin subunit beta (HBB) from Sus scrofa (Pig).